A 340-amino-acid chain; its full sequence is Entry-fusion complex protein OPG094 (340 aa).

The N-myristoyl glycine; by host moiety is linked to residue Gly-2. Topologically, residues Gly-2 to Asp-319 are virion surface. The helical; Signal-anchor for type II membrane protein transmembrane segment at Leu-320–Ile-340 threads the bilayer.

It belongs to the orthopoxvirus OPG086 family. In terms of assembly, interacts with OPG143. Component of the entry fusion complex (EFC) composed of OPG053, OPG076, OPG086, OPG094, OPG095, OPG099, OPG107, OPG143, OPG104, OPG147 and OPG155. Except for OPG095 and OPG053, each of the EFC proteins is required for assembly or stability of the complex. Unglycosylated because produced in viral factories instead of the classic ER -Golgi route.

It localises to the virion membrane. Component of the entry fusion complex (EFC), which consists of 11 proteins. During cell infection, this complex mediates entry of the virion core into the host cytoplasm by a two-step mechanism consisting of lipid mixing of the viral and cellular membranes and subsequent pore formation. The polypeptide is Entry-fusion complex protein OPG094 (OPG094) (Homo sapiens (Human)).